A 372-amino-acid chain; its full sequence is Lipoyl synthase, mitochondrial (372 aa).

The N-terminal 27 residues, 1-27 (MSLRCGDAARTLGPRVFGRYFCSPVRP), are a transit peptide targeting the mitochondrion. Cysteine 106, cysteine 111, cysteine 117, cysteine 137, cysteine 141, cysteine 144, and serine 352 together coordinate [4Fe-4S] cluster. In terms of domain architecture, Radical SAM core spans 122-341 (EYATATATIM…EKVGNELGFH (220 aa)).

This sequence belongs to the radical SAM superfamily. Lipoyl synthase family. [4Fe-4S] cluster is required as a cofactor.

It is found in the mitochondrion. It catalyses the reaction [[Fe-S] cluster scaffold protein carrying a second [4Fe-4S](2+) cluster] + N(6)-octanoyl-L-lysyl-[protein] + 2 oxidized [2Fe-2S]-[ferredoxin] + 2 S-adenosyl-L-methionine + 4 H(+) = [[Fe-S] cluster scaffold protein] + N(6)-[(R)-dihydrolipoyl]-L-lysyl-[protein] + 4 Fe(3+) + 2 hydrogen sulfide + 2 5'-deoxyadenosine + 2 L-methionine + 2 reduced [2Fe-2S]-[ferredoxin]. It functions in the pathway protein modification; protein lipoylation via endogenous pathway; protein N(6)-(lipoyl)lysine from octanoyl-[acyl-carrier-protein]: step 2/2. Catalyzes the radical-mediated insertion of two sulfur atoms into the C-6 and C-8 positions of the octanoyl moiety bound to the lipoyl domains of lipoate-dependent enzymes, thereby converting the octanoylated domains into lipoylated derivatives. In Homo sapiens (Human), this protein is Lipoyl synthase, mitochondrial.